The primary structure comprises 58 residues: Succinate dehydrogenase subunit 8A, mitochondrial (58 aa).

Component of complex II composed of eight subunits in plants: four classical SDH subunits SDH1, SDH2, SDH3 and SDH4 (a flavoprotein (FP), an iron-sulfur protein (IP), and a cytochrome b composed of a large and a small subunit.), as well as four subunits unknown in mitochondria from bacteria and heterotrophic eukaryotes.

The protein localises to the mitochondrion inner membrane. Its pathway is carbohydrate metabolism; tricarboxylic acid cycle. In Oryza sativa subsp. japonica (Rice), this protein is Succinate dehydrogenase subunit 8A, mitochondrial.